Consider the following 247-residue polypeptide: Aspartate/glutamate leucyltransferase (247 aa).

The protein belongs to the R-transferase family. Bpt subfamily.

It is found in the cytoplasm. The enzyme catalyses N-terminal L-glutamyl-[protein] + L-leucyl-tRNA(Leu) = N-terminal L-leucyl-L-glutamyl-[protein] + tRNA(Leu) + H(+). The catalysed reaction is N-terminal L-aspartyl-[protein] + L-leucyl-tRNA(Leu) = N-terminal L-leucyl-L-aspartyl-[protein] + tRNA(Leu) + H(+). Functionally, functions in the N-end rule pathway of protein degradation where it conjugates Leu from its aminoacyl-tRNA to the N-termini of proteins containing an N-terminal aspartate or glutamate. In Chromohalobacter salexigens (strain ATCC BAA-138 / DSM 3043 / CIP 106854 / NCIMB 13768 / 1H11), this protein is Aspartate/glutamate leucyltransferase.